A 191-amino-acid polypeptide reads, in one-letter code: MITITDAAQSHFAKLLANQEEGTQIRVFVINPGTPTAECGVSYCPPDAVEATDTELKFEQLSAYIDELSKPYLEDAEIDFVTDQLGSQLTLKAPNAKMRKVDDNAPLMERVEYVLQSQINPQLAGHGGRVTLMEITPDALAILQFGGGCNGCSMVDVTLKEGIEKELLQKFPELKGVRDLTEHQRGEHSYY.

The [4Fe-4S] cluster site is built by C149 and C152.

It belongs to the NfuA family. Homodimer. It depends on [4Fe-4S] cluster as a cofactor.

Involved in iron-sulfur cluster biogenesis. Binds a 4Fe-4S cluster, can transfer this cluster to apoproteins, and thereby intervenes in the maturation of Fe/S proteins. Could also act as a scaffold/chaperone for damaged Fe/S proteins. This Yersinia enterocolitica serotype O:8 / biotype 1B (strain NCTC 13174 / 8081) protein is Fe/S biogenesis protein NfuA.